Consider the following 211-residue polypeptide: Probable nicotinate-nucleotide adenylyltransferase (211 aa).

It belongs to the NadD family.

The enzyme catalyses nicotinate beta-D-ribonucleotide + ATP + H(+) = deamido-NAD(+) + diphosphate. The protein operates within cofactor biosynthesis; NAD(+) biosynthesis; deamido-NAD(+) from nicotinate D-ribonucleotide: step 1/1. In terms of biological role, catalyzes the reversible adenylation of nicotinate mononucleotide (NaMN) to nicotinic acid adenine dinucleotide (NaAD). The sequence is that of Probable nicotinate-nucleotide adenylyltransferase from Shewanella sediminis (strain HAW-EB3).